A 303-amino-acid chain; its full sequence is Mycothiol acetyltransferase (303 aa).

N-acetyltransferase domains follow at residues 1–150 (MALL…RPLD) and 162–303 (VTIR…QFGR). Glu18 contributes to the 1D-myo-inositol 2-(L-cysteinylamino)-2-deoxy-alpha-D-glucopyranoside binding site. Acetyl-CoA is bound at residue 77 to 79 (LAV). 3 residues coordinate 1D-myo-inositol 2-(L-cysteinylamino)-2-deoxy-alpha-D-glucopyranoside: Glu189, Lys229, and Glu237. Acetyl-CoA-binding positions include 241 to 243 (VGV) and 248 to 254 (QGNGLGR). Tyr275 is a 1D-myo-inositol 2-(L-cysteinylamino)-2-deoxy-alpha-D-glucopyranoside binding site. Residue 280–285 (NTAAIK) coordinates acetyl-CoA.

Belongs to the acetyltransferase family. MshD subfamily. In terms of assembly, monomer.

The catalysed reaction is 1D-myo-inositol 2-(L-cysteinylamino)-2-deoxy-alpha-D-glucopyranoside + acetyl-CoA = mycothiol + CoA + H(+). Functionally, catalyzes the transfer of acetyl from acetyl-CoA to desacetylmycothiol (Cys-GlcN-Ins) to form mycothiol. The polypeptide is Mycothiol acetyltransferase (Saccharopolyspora erythraea (strain ATCC 11635 / DSM 40517 / JCM 4748 / NBRC 13426 / NCIMB 8594 / NRRL 2338)).